A 362-amino-acid chain; its full sequence is Phosphoserine aminotransferase (362 aa).

Residues Ser-9 and Arg-42 each contribute to the L-glutamate site. Pyridoxal 5'-phosphate contacts are provided by residues 76-77 (GR), Trp-102, Thr-153, Asp-174, and Gln-197. The residue at position 198 (Lys-198) is an N6-(pyridoxal phosphate)lysine. A pyridoxal 5'-phosphate-binding site is contributed by 239–240 (NT).

This sequence belongs to the class-V pyridoxal-phosphate-dependent aminotransferase family. SerC subfamily. Homodimer. Requires pyridoxal 5'-phosphate as cofactor.

It is found in the cytoplasm. The catalysed reaction is O-phospho-L-serine + 2-oxoglutarate = 3-phosphooxypyruvate + L-glutamate. It catalyses the reaction 4-(phosphooxy)-L-threonine + 2-oxoglutarate = (R)-3-hydroxy-2-oxo-4-phosphooxybutanoate + L-glutamate. Its pathway is amino-acid biosynthesis; L-serine biosynthesis; L-serine from 3-phospho-D-glycerate: step 2/3. The protein operates within cofactor biosynthesis; pyridoxine 5'-phosphate biosynthesis; pyridoxine 5'-phosphate from D-erythrose 4-phosphate: step 3/5. Catalyzes the reversible conversion of 3-phosphohydroxypyruvate to phosphoserine and of 3-hydroxy-2-oxo-4-phosphonooxybutanoate to phosphohydroxythreonine. The sequence is that of Phosphoserine aminotransferase from Salmonella choleraesuis (strain SC-B67).